Reading from the N-terminus, the 251-residue chain is 3-isopropylmalate dehydratase small subunit 1 (251 aa).

A chloroplast-targeting transit peptide spans 1 to 59; that stretch reads MAASLQSANPTLSRTLASPNKPSSFATFRSPFLRFNSTSVASNFKPLVSREASSSFVTR.

The protein belongs to the LeuD family. Heterodimer of the large LEUC/IIL1 subunit and the small LEUD (SSU1, SSU2 or SSU3) subunits. Expressed at low levels in roots, root tips, at the basis of the hypocotyls, and in emerging leaves. In young seedlings, expressed in cotyledon epidermal cells. In hypocotyls, expressed in peripheral cells. In seedling roots, expressed in the epidermis, including root hairs, and throughout the cortex. In rosette leaves, expressed in the upper and lower epidermis. In roots of adult plants, expressed in the root tips and cortex of the mature root enclosing the stele. In flowering stalks, expressed in the epidermis. Expressed in the carpel epidermis.

It is found in the plastid. The protein resides in the chloroplast stroma. It catalyses the reaction (2R,3S)-3-isopropylmalate = (2S)-2-isopropylmalate. Its pathway is amino-acid biosynthesis; L-leucine biosynthesis; L-leucine from 3-methyl-2-oxobutanoate: step 2/4. Catalyzes the isomerization between 2-isopropylmalate and 3-isopropylmalate, via the formation of 2-isopropylmaleate. Plays an essential role in leucine biosynthesis. Functions in both the biosynthesis of leucine, and in the methionine chain elongation pathway of aliphatic glucosinolate formation. Plays an essential role in female gametophyte development. The protein is 3-isopropylmalate dehydratase small subunit 1 of Arabidopsis thaliana (Mouse-ear cress).